The sequence spans 565 residues: Ubiquitin carboxyl-terminal hydrolase 21 (565 aa).

A compositionally biased stretch (basic and acidic residues) spans methionine 1–glutamate 14. Disordered regions lie at residues methionine 1–proline 103, alanine 109–glycine 128, and leucine 142–phenylalanine 163. The span at alanine 42–glycine 57 shows a compositional bias: pro residues. A compositionally biased stretch (basic and acidic residues) spans proline 58 to arginine 70. The span at glycine 71 to leucine 82 shows a compositional bias: low complexity. The Nuclear export signal motif lies at glutamate 134–arginine 152. One can recognise a USP domain in the interval valine 212 to methionine 558. Catalysis depends on cysteine 221, which acts as the Nucleophile. Zn(2+) contacts are provided by cysteine 384, cysteine 387, cysteine 437, and cysteine 440. Histidine 518 serves as the catalytic Proton acceptor.

Belongs to the peptidase C19 family. USP21 subfamily. In terms of assembly, interacts with BEND3.

It is found in the cytoplasm. It localises to the nucleus. It carries out the reaction Thiol-dependent hydrolysis of ester, thioester, amide, peptide and isopeptide bonds formed by the C-terminal Gly of ubiquitin (a 76-residue protein attached to proteins as an intracellular targeting signal).. Its function is as follows. Deubiquitinating enzyme that hydrolyzes 'Lys-6'- and 'Lys-11'-linked polyubiquitin. Also hydrolyzes heterotypic (mixed and branched) and homotypic chains. Important regulator of energy metabolism. Glucose and fatty acids trigger its nuclear translocation by CBP-dependent acetylation. In the nucleus, deubiquitinates and stabilizes the nuclear receptor PPARD regulating the expression of various genes involved in glucose and lipid metabolism and oxidative phosphorylation. Also acts as a negative regulator of the ribosome quality control (RQC) by mediating deubiquitination of 40S ribosomal proteins RPS10/eS10 and RPS20/uS10, thereby antagonizing ZNF598-mediated 40S ubiquitination. This Bos taurus (Bovine) protein is Ubiquitin carboxyl-terminal hydrolase 21 (USP21).